The sequence spans 138 residues: Large ribosomal subunit protein uL16 (138 aa).

It belongs to the universal ribosomal protein uL16 family. Part of the 50S ribosomal subunit.

Binds 23S rRNA and is also seen to make contacts with the A and possibly P site tRNAs. The protein is Large ribosomal subunit protein uL16 of Ureaplasma parvum serovar 3 (strain ATCC 27815 / 27 / NCTC 11736).